Consider the following 43-residue polypeptide: uncharacterized protein (43 aa).

This is an uncharacterized protein from Bacillus subtilis (strain 168).